We begin with the raw amino-acid sequence, 860 residues long: GPI ethanolamine phosphate transferase 2 (860 aa).

N-linked (GlcNAc...) asparagine glycosylation is found at N123 and N180. Helical transmembrane passes span 408–428 (LGGI…FSAL), 438–458 (LYLI…TVEE), 459–479 (EHQI…ISGS), 487–506 (FNWM…NQTG), 524–544 (NHPV…NKVW), 555–575 (LAFL…ITQA), 576–596 (WEAG…PGTL), and 639–659 (AFLT…LFMV). N672 carries an N-linked (GlcNAc...) asparagine glycan. The next 4 membrane-spanning stretches (helical) occupy residues 692–712 (LVLV…FSMG), 736–756 (FVGV…STAG), 795–815 (VYVV…TCFF), and 834–854 (FVWT…IFVV).

It belongs to the PIGG/PIGN/PIGO family. PIGG subfamily.

It localises to the endoplasmic reticulum membrane. Its pathway is glycolipid biosynthesis; glycosylphosphatidylinositol-anchor biosynthesis. Its function is as follows. Ethanolamine phosphate transferase involved in glycosylphosphatidylinositol-anchor biosynthesis. Transfers ethanolamine phosphate to the GPI second mannose. The sequence is that of GPI ethanolamine phosphate transferase 2 (LAS21) from Yarrowia lipolytica (strain CLIB 122 / E 150) (Yeast).